A 127-amino-acid polypeptide reads, in one-letter code: MSSTNGNAPATPSSDQNPLPTRFEVELEFIQSLANIQYVTYLLTQQQIWKSPNFKNYLKYLEYWCNPPYSQCIVYPNCLFILKLLNGFMESAIVNEDGLLEGLDELPKIIQLQGPQWMNEMVERWAN.

It belongs to the Mediator complex subunit 31 family. Component of the Mediator complex, which is composed of at least 21 subunits that form three structurally distinct submodules. The Mediator head module contains MED6, MED8, MED11, SRB4/MED17, SRB5/MED18, ROX3/MED19, SRB2/MED20 and SRB6/MED22, the middle module contains MED1, MED4, NUT1/MED5, MED7, CSE2/MED9, NUT2/MED10, SRB7/MED21 and SOH1/MED31, and the tail module contains MED2, PGD1/MED3, RGR1/MED14, GAL11/MED15 and SIN4/MED16. The head and the middle modules interact directly with RNA polymerase II, whereas the elongated tail module interacts with gene-specific regulatory proteins.

The protein resides in the nucleus. In terms of biological role, component of the Mediator complex, a coactivator involved in the regulated transcription of nearly all RNA polymerase II-dependent genes. Mediator functions as a bridge to convey information from gene-specific regulatory proteins to the basal RNA polymerase II transcription machinery. The Mediator complex, having a compact conformation in its free form, is recruited to promoters by direct interactions with regulatory proteins and serves for the assembly of a functional preinitiation complex with RNA polymerase II and the general transcription factors. The Mediator complex unfolds to an extended conformation and partially surrounds RNA polymerase II, specifically interacting with the unphosphorylated form of the C-terminal domain (CTD) of RNA polymerase II. The Mediator complex dissociates from the RNA polymerase II holoenzyme and stays at the promoter when transcriptional elongation begins. In Saccharomyces cerevisiae (strain ATCC 204508 / S288c) (Baker's yeast), this protein is Mediator of RNA polymerase II transcription subunit 31 (SOH1).